A 62-amino-acid chain; its full sequence is E3 SUMO-protein ligase EGR2 (62 aa).

3 consecutive C2H2-type zinc fingers follow at residues 1–21 (AEGC…IRIH), 27–49 (FQCA…IRTH), and 55–62 (FACDYCGR).

It belongs to the EGR C2H2-type zinc-finger protein family. As to quaternary structure, interacts with HCFC1. Interacts with WWP2. Interacts with UBC9. Interacts with CITED1. Interacts (via phosphorylated form) with SFN. Ubiquitinated by WWP2 leading to proteasomal degradation. Post-translationally, acetylated. May be deacetylated by HDAC6, HDAC10 or SIRT1.

Its subcellular location is the nucleus. The protein operates within protein modification; protein sumoylation. Sequence-specific DNA-binding transcription factor. Plays a role in hindbrain segmentation by regulating the expression of a subset of homeobox containing genes and in Schwann cell myelination by regulating the expression of genes involved in the formation and maintenance of myelin. Binds to two EGR2-consensus sites EGR2A (5'-CTGTAGGAG-3') and EGR2B (5'-ATGTAGGTG-3') in the HOXB3 enhancer and promotes HOXB3 transcriptional activation. Binds to specific DNA sites located in the promoter region of HOXA4, HOXB2 and ERBB2. Regulates hindbrain segmentation by controlling the expression of Hox genes, such as HOXA4, HOXB3 and HOXB2, and thereby specifying odd and even rhombomeres. Promotes the expression of HOXB3 in the rhombomere r5 in the hindbrain. Regulates myelination in the peripheral nervous system after birth, possibly by regulating the expression of myelin proteins, such as MPZ, and by promoting the differentiation of Schwann cells. Involved in the development of the jaw openener musculature, probably by playing a role in its innervation through trigeminal motor neurons. May play a role in adipogenesis, possibly by regulating the expression of CEBPB. In terms of biological role, E3 SUMO-protein ligase helping SUMO1 conjugation to its coregulators NAB1 and NAB2, whose sumoylation down-regulates EGR2 transcriptional activity. The chain is E3 SUMO-protein ligase EGR2 (EGR2) from Cerdocyon thous (Crab-eating fox).